Here is a 95-residue protein sequence, read N- to C-terminus: Signal recognition particle 19 kDa protein (95 aa).

It belongs to the SRP19 family. Part of the signal recognition particle protein translocation system, which is composed of SRP and FtsY. Archaeal SRP consists of a 7S RNA molecule of 300 nucleotides and two protein subunits: SRP54 and SRP19.

Its subcellular location is the cytoplasm. Functionally, involved in targeting and insertion of nascent membrane proteins into the cytoplasmic membrane. Binds directly to 7S RNA and mediates binding of the 54 kDa subunit of the SRP. This is Signal recognition particle 19 kDa protein from Methanococcoides burtonii (strain DSM 6242 / NBRC 107633 / OCM 468 / ACE-M).